The sequence spans 229 residues: Uracil-DNA glycosylase (229 aa).

Asp-67 (proton acceptor) is an active-site residue.

It belongs to the uracil-DNA glycosylase (UDG) superfamily. UNG family.

It localises to the cytoplasm. The catalysed reaction is Hydrolyzes single-stranded DNA or mismatched double-stranded DNA and polynucleotides, releasing free uracil.. Excises uracil residues from the DNA which can arise as a result of misincorporation of dUMP residues by DNA polymerase or due to deamination of cytosine. This chain is Uracil-DNA glycosylase, found in Coxiella burnetii (strain RSA 493 / Nine Mile phase I).